Here is a 399-residue protein sequence, read N- to C-terminus: MSPPSASRRTREEVDATLQVAKLNATELLPTVHCLSFSSGTGGAATGDFCLLELEPALCQQLEAGDSFVIRGDKDEQAVLCSKDKTYDLKIADTSNMLLFIPGCKTPDQLKEEETPSAIVHTEIFGFSNNYWELRRCRPKLKKLKRLLMENTYEGPDSQKEEDASRSKYTTEDLLNHIQASEEEIMAQLQVLNACEIGGYWRILEFDYEIKLLNHVTQLVDSESWSLDRVPLTVCLQELGPLEPEEMIEHCLKCYGKRYVDKDDVYFELDADKICRVTAEMLLQNAVKFNLAEFQEVWQQSVPEGMTTRLDQLKGLALVDRNSRPEIIFLLKVDDLPEGTQDRFNSLFSLREKWTEEDITPYIQDLCGEKQTIGALLTKYSRSSMQNGIKVYNSRRLIS.

Belongs to the DCC1 family. In terms of assembly, component of the CTF18-RFC complex which consists of CTF8, CTF18, DSCC1 and the RFC complex. Interacts with CTF8 and CTF18. Interacts with DDX11.

It localises to the nucleus. Its function is as follows. Loads PCNA onto primed templates regulating velocity, spacing and restart activity of replication forks. May couple DNA replication to sister chromatid cohesion through regulation of the acetylation of the cohesin subunit SMC3. This chain is Sister chromatid cohesion protein DCC1 (DSCC1), found in Mus musculus (Mouse).